A 58-amino-acid chain; its full sequence is Large ribosomal subunit protein bL32 (58 aa).

The segment covering 1–19 (MAVPKRKTSKSNTKMRRAA) has biased composition (basic residues). A disordered region spans residues 1 to 22 (MAVPKRKTSKSNTKMRRAANSK).

The protein belongs to the bacterial ribosomal protein bL32 family.

This chain is Large ribosomal subunit protein bL32, found in Clostridioides difficile (strain 630) (Peptoclostridium difficile).